Consider the following 257-residue polypeptide: Tryptophan synthase alpha chain (257 aa).

Catalysis depends on proton acceptor residues Glu-44 and Asp-55.

The protein belongs to the TrpA family. In terms of assembly, tetramer of two alpha and two beta chains.

The catalysed reaction is (1S,2R)-1-C-(indol-3-yl)glycerol 3-phosphate + L-serine = D-glyceraldehyde 3-phosphate + L-tryptophan + H2O. It participates in amino-acid biosynthesis; L-tryptophan biosynthesis; L-tryptophan from chorismate: step 5/5. Its function is as follows. The alpha subunit is responsible for the aldol cleavage of indoleglycerol phosphate to indole and glyceraldehyde 3-phosphate. This chain is Tryptophan synthase alpha chain, found in Chlamydia caviae (strain ATCC VR-813 / DSM 19441 / 03DC25 / GPIC) (Chlamydophila caviae).